A 169-amino-acid chain; its full sequence is NADH-quinone oxidoreductase subunit I (169 aa).

4Fe-4S ferredoxin-type domains follow at residues 61–90 and 100–129; these read RRYD…IESE and TRYD…ETHI. Positions 70, 73, 76, 80, 109, 112, 115, and 119 each coordinate [4Fe-4S] cluster.

This sequence belongs to the complex I 23 kDa subunit family. NDH-1 is composed of 14 different subunits. Subunits NuoA, H, J, K, L, M, N constitute the membrane sector of the complex. [4Fe-4S] cluster is required as a cofactor.

It is found in the cell inner membrane. It catalyses the reaction a quinone + NADH + 5 H(+)(in) = a quinol + NAD(+) + 4 H(+)(out). Functionally, NDH-1 shuttles electrons from NADH, via FMN and iron-sulfur (Fe-S) centers, to quinones in the respiratory chain. The immediate electron acceptor for the enzyme in this species is believed to be ubiquinone. Couples the redox reaction to proton translocation (for every two electrons transferred, four hydrogen ions are translocated across the cytoplasmic membrane), and thus conserves the redox energy in a proton gradient. In Verminephrobacter eiseniae (strain EF01-2), this protein is NADH-quinone oxidoreductase subunit I.